Here is a 364-residue protein sequence, read N- to C-terminus: UDP-N-acetylglucosamine--N-acetylmuramyl-(pentapeptide) pyrophosphoryl-undecaprenol N-acetylglucosamine transferase (364 aa).

UDP-N-acetyl-alpha-D-glucosamine contacts are provided by residues 10–12 (TGG), Asn128, Arg170, Ser199, Ile250, and Gln295.

Belongs to the glycosyltransferase 28 family. MurG subfamily.

It localises to the cell inner membrane. It carries out the reaction di-trans,octa-cis-undecaprenyl diphospho-N-acetyl-alpha-D-muramoyl-L-alanyl-D-glutamyl-meso-2,6-diaminopimeloyl-D-alanyl-D-alanine + UDP-N-acetyl-alpha-D-glucosamine = di-trans,octa-cis-undecaprenyl diphospho-[N-acetyl-alpha-D-glucosaminyl-(1-&gt;4)]-N-acetyl-alpha-D-muramoyl-L-alanyl-D-glutamyl-meso-2,6-diaminopimeloyl-D-alanyl-D-alanine + UDP + H(+). It functions in the pathway cell wall biogenesis; peptidoglycan biosynthesis. Its function is as follows. Cell wall formation. Catalyzes the transfer of a GlcNAc subunit on undecaprenyl-pyrophosphoryl-MurNAc-pentapeptide (lipid intermediate I) to form undecaprenyl-pyrophosphoryl-MurNAc-(pentapeptide)GlcNAc (lipid intermediate II). This chain is UDP-N-acetylglucosamine--N-acetylmuramyl-(pentapeptide) pyrophosphoryl-undecaprenol N-acetylglucosamine transferase, found in Chlorobaculum parvum (strain DSM 263 / NCIMB 8327) (Chlorobium vibrioforme subsp. thiosulfatophilum).